We begin with the raw amino-acid sequence, 85 residues long: Glutaredoxin 1 (85 aa).

In terms of domain architecture, Glutaredoxin spans 1-85 (MQTVIFGRSG…AAWVKENLDA (85 aa)). Cys11 and Cys14 form a disulfide bridge.

The protein belongs to the glutaredoxin family. Monomer.

Its function is as follows. The disulfide bond functions as an electron carrier in the glutathione-dependent synthesis of deoxyribonucleotides by the enzyme ribonucleotide reductase. In addition, it is also involved in reducing some disulfides in a coupled system with glutathione reductase. This is Glutaredoxin 1 (grxA) from Shigella flexneri.